We begin with the raw amino-acid sequence, 535 residues long: Phosphoenolpyruvate carboxykinase (ATP) (535 aa).

Substrate is bound by residues Arg59, Tyr201, and Lys207. Residues Lys207, His226, and 243-251 (GLSGTGKTT) each bind ATP. Positions 207 and 226 each coordinate Mn(2+). Asp264 is a binding site for Mn(2+). ATP contacts are provided by residues Glu292, Arg328, 444–445 (RI), and Thr450. Arg328 serves as a coordination point for substrate.

Belongs to the phosphoenolpyruvate carboxykinase (ATP) family. The cofactor is Mn(2+).

The protein resides in the cytoplasm. The enzyme catalyses oxaloacetate + ATP = phosphoenolpyruvate + ADP + CO2. Its pathway is carbohydrate biosynthesis; gluconeogenesis. Its function is as follows. Involved in the gluconeogenesis. Catalyzes the conversion of oxaloacetate (OAA) to phosphoenolpyruvate (PEP) through direct phosphoryl transfer between the nucleoside triphosphate and OAA. In Parabacteroides distasonis (strain ATCC 8503 / DSM 20701 / CIP 104284 / JCM 5825 / NCTC 11152), this protein is Phosphoenolpyruvate carboxykinase (ATP).